Consider the following 243-residue polypeptide: Small ribosomal subunit protein uS2 (243 aa).

The protein belongs to the universal ribosomal protein uS2 family.

This is Small ribosomal subunit protein uS2 from Chromobacterium violaceum (strain ATCC 12472 / DSM 30191 / JCM 1249 / CCUG 213 / NBRC 12614 / NCIMB 9131 / NCTC 9757 / MK).